We begin with the raw amino-acid sequence, 211 residues long: MDIHVVDHPLAASRLTLMRDARSDNTAFRAALRDLGTMLVYEAARDLPVEHFDCVTPVATAEGTRLQNPPIIVPIIRAGLGMIDPALSMIPDAQVGFIGMARDEETHEPVPYLEALPEDLSGRSVFVVDPMLATGGSLLHSLKLLADRGATDITAICMVSAQPGVDALANSGLPVRLVTAAIDPALNEDAYIVPGLGDAGDRLYGPRNIDL.

5-phospho-alpha-D-ribose 1-diphosphate contacts are provided by residues R77, R102, and 129 to 137; that span reads DPMLATGGS. Uracil is bound by residues I192 and 197 to 199; that span reads GDA. 5-phospho-alpha-D-ribose 1-diphosphate is bound at residue D198.

Belongs to the UPRTase family. It depends on Mg(2+) as a cofactor.

It carries out the reaction UMP + diphosphate = 5-phospho-alpha-D-ribose 1-diphosphate + uracil. Its pathway is pyrimidine metabolism; UMP biosynthesis via salvage pathway; UMP from uracil: step 1/1. Its activity is regulated as follows. Allosterically activated by GTP. Functionally, catalyzes the conversion of uracil and 5-phospho-alpha-D-ribose 1-diphosphate (PRPP) to UMP and diphosphate. The protein is Uracil phosphoribosyltransferase of Corynebacterium aurimucosum (strain ATCC 700975 / DSM 44827 / CIP 107346 / CN-1) (Corynebacterium nigricans).